The chain runs to 193 residues: UPF0301 protein Fphi_1754 (193 aa).

This sequence belongs to the UPF0301 (AlgH) family.

The chain is UPF0301 protein Fphi_1754 from Francisella philomiragia subsp. philomiragia (strain ATCC 25017 / CCUG 19701 / FSC 153 / O#319-036).